Reading from the N-terminus, the 207-residue chain is Protein Nef (207 aa).

Gly-2 carries the N-myristoyl glycine; by host lipid modification. Position 6 is a phosphoserine; by host (Ser-6). Positions 62–66 (EESEE) are acidic; interacts with host PACS1 and PACS2; stabilizes the interaction of NEF/MHC-I with host AP1M1; necessary for MHC-I internalization. Positions 70–79 (PVRPQVPLRP) are SH3-binding; interaction with Src family tyrosine kinases. Residues 73 to 76 (PQVP) carry the PxxP; stabilizes the interaction of NEF/MHC-I with host AP1M1; necessary for MHC-I internalization motif. The segment at 109 to 125 (EILDLWVYNTQGIFPDW) is mediates dimerization, Nef-PTE1 interaction. Residues 149-181 (VDPQEVEEATEREDNCLLHPMCQQGMEDPERQV) form a binding to ATP6V1H region. The Dileucine internalization motif; necessary for CD4 internalization signature appears at 165-166 (LL). The Diacidic; necessary for CD4 internalization signature appears at 175-176 (ED).

It belongs to the lentivirus primate group Nef protein family. In terms of assembly, monomer; cytosolic form. Homodimer; membrane bound form. Interacts with Nef associated p21-activated kinase (PAK2); this interaction activates PAK2. Associates with the Nef-MHC-I-AP1 complex; this complex is required for MHC-I internalization. Interacts (via C-terminus) with host PI3-kinase. Interacts with host PACS1; this interaction seems to be weak. Interacts with host PACS2. Interacts with host LCK and MAPK3; these interactions inhibit the kinase activity of the latter. Interacts with host ATP6V1H; this interaction may play a role in CD4 endocytosis. Associates with the CD4-Nef-AP2 complex; this complex is required for CD4 internalization. Interacts with host AP2 subunit alpha and AP2 subunit sigma2. Interacts with TCR-zeta chain; this interaction up-regulates the Fas ligand (FasL) surface expression. Interacts with host HCK, LYN, and SRC; these interactions activate the Src family kinases. Interacts with MAP3K5; this interaction inhibits the Fas and TNFR-mediated death signals. Interacts with beta-COP and PTE1. Interacts with human RACK1; this increases Nef phosphorylation by PKC. Interacts with TP53; this interaction decreases the half-life of TP53, protecting the infected cell against p53-mediated apoptosis. Post-translationally, the virion-associated Nef proteins are cleaved by the viral protease to release the soluble C-terminal core protein. Nef is probably cleaved concomitantly with viral structural proteins on maturation of virus particles. Myristoylated. In terms of processing, phosphorylated on serine residues, probably by host PKCdelta and theta.

It is found in the host cell membrane. It localises to the virion. The protein resides in the secreted. Its subcellular location is the host Golgi apparatus membrane. Functionally, factor of infectivity and pathogenicity, required for optimal virus replication. Alters numerous pathways of T-lymphocyte function and down-regulates immunity surface molecules in order to evade host defense and increase viral infectivity. Alters the functionality of other immunity cells, like dendritic cells, monocytes/macrophages and NK cells. Its function is as follows. In infected CD4(+) T-lymphocytes, down-regulates the surface MHC-I, mature MHC-II, CD4, CD28, CCR5 and CXCR4 molecules. Mediates internalization and degradation of host CD4 through the interaction of with the cytoplasmic tail of CD4, the recruitment of AP-2 (clathrin adapter protein complex 2), internalization through clathrin coated pits, and subsequent transport to endosomes and lysosomes for degradation. Diverts host MHC-I molecules to the trans-Golgi network-associated endosomal compartments by an endocytic pathway to finally target them for degradation. MHC-I down-regulation may involve AP-1 (clathrin adapter protein complex 1) or possibly Src family kinase-ZAP70/Syk-PI3K cascade recruited by PACS2. In consequence infected cells are masked for immune recognition by cytotoxic T-lymphocytes. Decreasing the number of immune receptors also prevents reinfection by more HIV particles (superinfection). Down-regulates host SERINC3 and SERINC5 thereby excluding these proteins from the viral particles. Virion infectivity is drastically higher when SERINC3 or SERINC5 are excluded from the viral envelope, because these host antiviral proteins impair the membrane fusion event necessary for subsequent virion penetration. Bypasses host T-cell signaling by inducing a transcriptional program nearly identical to that of anti-CD3 cell activation. Interaction with TCR-zeta chain up-regulates the Fas ligand (FasL). Increasing surface FasL molecules and decreasing surface MHC-I molecules on infected CD4(+) cells send attacking cytotoxic CD8+ T-lymphocytes into apoptosis. In terms of biological role, plays a role in optimizing the host cell environment for viral replication without causing cell death by apoptosis. Protects the infected cells from apoptosis in order to keep them alive until the next virus generation is ready to strike. Inhibits the Fas and TNFR-mediated death signals by blocking MAP3K5/ASK1. Decreases the half-life of TP53, protecting the infected cell against p53-mediated apoptosis. Inhibits the apoptotic signals regulated by the Bcl-2 family proteins through the formation of a Nef/PI3-kinase/PAK2 complex that leads to activation of PAK2 and induces phosphorylation of host BAD. Functionally, extracellular Nef protein targets CD4(+) T-lymphocytes for apoptosis by interacting with CXCR4 surface receptors. The protein is Protein Nef of Human immunodeficiency virus type 1 group M subtype D (isolate NDK) (HIV-1).